The following is a 623-amino-acid chain: Dynein axonemal intermediate chain 2 (623 aa).

WD repeat units lie at residues 214-254 (KPLS…LVAE), 261-302 (SHRD…EPIE), 362-401 (GHHG…SSIM), 405-445 (YHMA…CDPA), and 450-489 (VCDD…STLQ). The interval 565–602 (AEALKKKPKPRKKSSVKVEAEEEVEENVGEEEEAGGII) is disordered. Residues 570-579 (KKPKPRKKSS) show a composition bias toward basic residues. Over residues 584–598 (AEEEVEENVGEEEEA) the composition is skewed to acidic residues.

The protein belongs to the dynein intermediate chain family. In terms of assembly, consists of at least two heavy chains and a number of intermediate and light chains. Interacts with DNAAF2. Interacts with DNAAF6/PIH1D3. Interacts with HEATR2; probably involved in outer arm dynein assembly. Interacts with CFAP53. As to expression, predominantly expressed in ovary, testis and lung.

It localises to the cytoplasm. It is found in the cytoskeleton. The protein resides in the cilium axoneme. Its subcellular location is the dynein axonemal particle. In terms of biological role, part of the dynein complex of respiratory cilia. This chain is Dynein axonemal intermediate chain 2 (Dnai2), found in Mus musculus (Mouse).